A 452-amino-acid chain; its full sequence is Translation initiation factor eIF2B subunit gamma (452 aa).

Met1 is subject to N-acetylmethionine. Ser261 carries the post-translational modification Phosphoserine.

It belongs to the eIF-2B gamma/epsilon subunits family. As to quaternary structure, component of the translation initiation factor 2B (eIF2B) complex which is a heterodecamer of two sets of five different subunits: alpha, beta, gamma, delta and epsilon. Subunits alpha, beta and delta comprise a regulatory subcomplex and subunits epsilon and gamma comprise a catalytic subcomplex. Within the complex, the hexameric regulatory complex resides at the center, with the two heterodimeric catalytic subcomplexes bound on opposite sides.

It localises to the cytoplasm. The protein localises to the cytosol. Activated by the chemical integrated stress response (ISR) inhibitor ISRIB which stimulates guanine nucleotide exchange factor activity for both phosphorylated and unphosphorylated eIF2. In terms of biological role, acts as a component of the translation initiation factor 2B (eIF2B) complex, which catalyzes the exchange of GDP for GTP on the eukaryotic initiation factor 2 (eIF2) complex gamma subunit. Its guanine nucleotide exchange factor activity is repressed when bound to eIF2 complex phosphorylated on the alpha subunit, thereby limiting the amount of methionyl-initiator methionine tRNA available to the ribosome and consequently global translation is repressed. This is Translation initiation factor eIF2B subunit gamma (EIF2B3) from Bos taurus (Bovine).